The primary structure comprises 142 residues: FAD synthase (142 aa).

Residues 9–10 (VF), 14–17 (HLGH), aspartate 93, and tyrosine 120 contribute to the ATP site.

Belongs to the archaeal FAD synthase family. In terms of assembly, homodimer. Requires a divalent metal cation as cofactor.

It carries out the reaction FMN + ATP + H(+) = FAD + diphosphate. It participates in cofactor biosynthesis; FAD biosynthesis; FAD from FMN: step 1/1. Catalyzes the transfer of the AMP portion of ATP to flavin mononucleotide (FMN) to produce flavin adenine dinucleotide (FAD) coenzyme. This chain is FAD synthase, found in Thermoplasma acidophilum (strain ATCC 25905 / DSM 1728 / JCM 9062 / NBRC 15155 / AMRC-C165).